A 100-amino-acid chain; its full sequence is Urease subunit gamma (100 aa).

This sequence belongs to the urease gamma subunit family. In terms of assembly, heterotrimer of UreA (gamma), UreB (beta) and UreC (alpha) subunits. Three heterotrimers associate to form the active enzyme.

It localises to the cytoplasm. It catalyses the reaction urea + 2 H2O + H(+) = hydrogencarbonate + 2 NH4(+). It functions in the pathway nitrogen metabolism; urea degradation; CO(2) and NH(3) from urea (urease route): step 1/1. The polypeptide is Urease subunit gamma (Prochlorococcus marinus (strain MIT 9215)).